Consider the following 459-residue polypeptide: Ribulose bisphosphate carboxylase large chain (459 aa).

Lys4 is modified (N6,N6,N6-trimethyllysine). The substrate site is built by Asn113 and Thr163. Lys165 functions as the Proton acceptor in the catalytic mechanism. A substrate-binding site is contributed by Lys167. Mg(2+) contacts are provided by Lys191, Asp193, and Glu194. Lys191 carries the post-translational modification N6-carboxylysine. His284 acts as the Proton acceptor in catalysis. Arg285, His317, and Ser369 together coordinate substrate.

This sequence belongs to the RuBisCO large chain family. Type I subfamily. Heterohexadecamer of 8 large chains and 8 small chains; disulfide-linked. The disulfide link is formed within the large subunit homodimers. The cofactor is Mg(2+). In terms of processing, the disulfide bond which can form in the large chain dimeric partners within the hexadecamer appears to be associated with oxidative stress and protein turnover.

The protein resides in the plastid. It is found in the chloroplast. It carries out the reaction 2 (2R)-3-phosphoglycerate + 2 H(+) = D-ribulose 1,5-bisphosphate + CO2 + H2O. It catalyses the reaction D-ribulose 1,5-bisphosphate + O2 = 2-phosphoglycolate + (2R)-3-phosphoglycerate + 2 H(+). RuBisCO catalyzes two reactions: the carboxylation of D-ribulose 1,5-bisphosphate, the primary event in carbon dioxide fixation, as well as the oxidative fragmentation of the pentose substrate in the photorespiration process. Both reactions occur simultaneously and in competition at the same active site. This is Ribulose bisphosphate carboxylase large chain from Ceratopetalum gummiferum (New South Wales Christmas bush).